Here is a 359-residue protein sequence, read N- to C-terminus: Adenosine 3'-phospho 5'-phosphosulfate transporter 1 (359 aa).

Transmembrane regions (helical) follow at residues 26–46 (NMKL…YGIL), 68–88 (STFL…VIVL), 157–177 (YSIA…GKIS), 184–204 (TSYG…TSTF), 228–248 (SIIS…IEFI), 254–276 (VFFD…YYTI), and 300–320 (TLIY…LVFG). Residues 332–359 (KKHGGHSHGGSNAATTTTPSNNSNNTEK) form a disordered region. The span at 340 to 359 (GGSNAATTTTPSNNSNNTEK) shows a compositional bias: low complexity.

It belongs to the nucleotide-sugar transporter family. SLC35B subfamily.

It localises to the golgi apparatus membrane. It carries out the reaction 3'-phosphoadenylyl sulfate(in) + adenosine 3',5'-bisphosphate(out) = 3'-phosphoadenylyl sulfate(out) + adenosine 3',5'-bisphosphate(in). Probably functions as a 3'-phosphoadenylyl sulfate:adenosine 3',5'-bisphosphate antiporter at the Golgi membranes. Mediates the transport from the cytosol into the lumen of the Golgi of 3'-phosphoadenylyl sulfate/adenosine 3'-phospho 5'-phosphosulfate (PAPS), a universal sulfuryl donor for sulfation events that take place in that compartment. The sequence is that of Adenosine 3'-phospho 5'-phosphosulfate transporter 1 (slc35b2) from Dictyostelium discoideum (Social amoeba).